Consider the following 95-residue polypeptide: MKDPRDVLKRPVITERSADLMTEKKYTFEVDVRANKTEVKDAVESIFGVKVDKVNIMNYKGKSKRVGRYTGMTSRRRKAIVKLTADSKEIEIFEA.

It belongs to the universal ribosomal protein uL23 family. In terms of assembly, part of the 50S ribosomal subunit. Contacts protein L29, and trigger factor when it is bound to the ribosome.

Functionally, one of the early assembly proteins it binds 23S rRNA. One of the proteins that surrounds the polypeptide exit tunnel on the outside of the ribosome. Forms the main docking site for trigger factor binding to the ribosome. The protein is Large ribosomal subunit protein uL23 of Bacillus subtilis (strain 168).